The sequence spans 99 residues: Cell division protein FtsB (99 aa).

Over 1 to 3 (MKF) the chain is Cytoplasmic. The chain crosses the membrane as a helical span at residues 4–21 (FVIALIVLLGLLQYRLWS). Over 22 to 99 (GDNSLPEYFV…GDRSVSSPSQ (78 aa)) the chain is Periplasmic. Residues 31–73 (VLQKQIAAQQEGNAKLNERNQVLKEEIIDLKSGTEAIEERARN) adopt a coiled-coil conformation.

Belongs to the FtsB family. As to quaternary structure, part of a complex composed of FtsB, FtsL and FtsQ.

It localises to the cell inner membrane. Essential cell division protein. May link together the upstream cell division proteins, which are predominantly cytoplasmic, with the downstream cell division proteins, which are predominantly periplasmic. This is Cell division protein FtsB from Shewanella sp. (strain ANA-3).